The sequence spans 192 residues: Flavin prenyltransferase UbiX (192 aa).

FMN-binding positions include 10–12 (GAS), Ser36, 92–95 (SVAT), and Arg127. Dimethylallyl phosphate-binding residues include Tyr157 and Lys173.

It belongs to the UbiX/PAD1 family.

The enzyme catalyses dimethylallyl phosphate + FMNH2 = prenylated FMNH2 + phosphate. In terms of biological role, flavin prenyltransferase that catalyzes the synthesis of the prenylated FMN cofactor (prenyl-FMN) for 4-hydroxy-3-polyprenylbenzoic acid decarboxylase UbiD. The prenyltransferase is metal-independent and links a dimethylallyl moiety from dimethylallyl monophosphate (DMAP) to the flavin N5 and C6 atoms of FMN. The sequence is that of Flavin prenyltransferase UbiX from Chlamydia muridarum (strain MoPn / Nigg).